The following is a 473-amino-acid chain: Poly(A) polymerase catalytic subunit (473 aa).

Catalysis depends on residues Asp-193 and Asp-195.

The protein belongs to the poxviridae poly(A) polymerase catalytic subunit family. As to quaternary structure, heterodimer of a large (catalytic) subunit and a small (regulatory) subunit.

The catalysed reaction is RNA(n) + ATP = RNA(n)-3'-adenine ribonucleotide + diphosphate. Functionally, polymerase that creates the 3'-poly(A) tail of mRNA's. This Crocodylus johnstoni (Australian freshwater crocodile) protein is Poly(A) polymerase catalytic subunit (PAPL).